Consider the following 428-residue polypeptide: Glutamate-1-semialdehyde 2,1-aminomutase (428 aa).

Residue lysine 265 is modified to N6-(pyridoxal phosphate)lysine.

It belongs to the class-III pyridoxal-phosphate-dependent aminotransferase family. HemL subfamily. As to quaternary structure, homodimer. The cofactor is pyridoxal 5'-phosphate.

It is found in the cytoplasm. The catalysed reaction is (S)-4-amino-5-oxopentanoate = 5-aminolevulinate. It participates in porphyrin-containing compound metabolism; protoporphyrin-IX biosynthesis; 5-aminolevulinate from L-glutamyl-tRNA(Glu): step 2/2. The chain is Glutamate-1-semialdehyde 2,1-aminomutase from Aeromonas salmonicida (strain A449).